The sequence spans 147 residues: 3-dehydroquinate dehydratase (147 aa).

Catalysis depends on Y25, which acts as the Proton acceptor. Substrate-binding residues include N76, H82, and D89. H102 acts as the Proton donor in catalysis. Residues 103 to 104 (LS) and R113 each bind substrate.

This sequence belongs to the type-II 3-dehydroquinase family. Homododecamer.

The enzyme catalyses 3-dehydroquinate = 3-dehydroshikimate + H2O. It participates in metabolic intermediate biosynthesis; chorismate biosynthesis; chorismate from D-erythrose 4-phosphate and phosphoenolpyruvate: step 3/7. Its function is as follows. Catalyzes a trans-dehydration via an enolate intermediate. The sequence is that of 3-dehydroquinate dehydratase from Nostoc sp. (strain PCC 7120 / SAG 25.82 / UTEX 2576).